A 187-amino-acid polypeptide reads, in one-letter code: Calcium and integrin-binding family member 2 (187 aa).

3 EF-hand domains span residues 66-101 (RENP…LCES), 103-138 (PREL…LTKS), and 144-179 (EVVL…APDF). Ca(2+) contacts are provided by D116, N118, D120, D127, D157, D159, D161, K163, and D168.

In terms of assembly, monomer. Homodimer. Interacts with WHRN and MYO7A. Interacts with ITGA2B (via C-terminus cytoplasmic tail region); the interactions are stabilized/increased in a calcium and magnesium-dependent manner. Interacts with ITGA7 (via C-terminus cytoplasmic tail region); the interactions are stabilized/increased in a calcium and magnesium-dependent manner. Interacts with TMC1. Interacts with TMC2. Widely expressed.

It is found in the cytoplasm. Its subcellular location is the cell projection. The protein localises to the stereocilium. It localises to the photoreceptor inner segment. The protein resides in the cilium. It is found in the photoreceptor outer segment. Its subcellular location is the cell membrane. The protein localises to the sarcolemma. Calcium- and integrin-binding protein that plays a role in intracellular calcium homeostasis. Acts as an auxiliary subunit of the sensory mechanoelectrical transduction (MET) channel in hair cells. Essential for mechanoelectrical transduction (MET) currents in auditory hair cells and thereby required for hearing. Regulates the function of hair cell mechanotransduction by controlling the distribution of transmembrane channel-like proteins TMC1 and TMC2, and by regulating the function of the MET channels in hair cells. Required for the maintenance of auditory hair cell stereocilia bundle morphology and function and for hair-cell survival in the cochlea. Critical for proper photoreceptor cell maintenance and function. Plays a role in intracellular calcium homeostasis by decreasing ATP-induced calcium release. The chain is Calcium and integrin-binding family member 2 (CIB2) from Homo sapiens (Human).